The primary structure comprises 217 residues: Small ribosomal subunit protein uS3 (217 aa).

Positions Ile38 to Lys106 constitute a KH type-2 domain.

The protein belongs to the universal ribosomal protein uS3 family. In terms of assembly, part of the 30S ribosomal subunit. Forms a tight complex with proteins S10 and S14.

Binds the lower part of the 30S subunit head. Binds mRNA in the 70S ribosome, positioning it for translation. The chain is Small ribosomal subunit protein uS3 from Streptococcus equi subsp. equi (strain 4047).